Consider the following 231-residue polypeptide: UPF0758 protein YsxA (231 aa).

The MPN domain maps to 109 to 231 (VIRSPEDGAN…FVSLKEKGYL (123 aa)). Residues histidine 180, histidine 182, and aspartate 193 each contribute to the Zn(2+) site. Positions 180 to 193 (HNHPSGDPTPSRED) match the JAMM motif motif.

It belongs to the UPF0758 family.

The polypeptide is UPF0758 protein YsxA (ysxA) (Bacillus subtilis (strain 168)).